The chain runs to 397 residues: GPI mannosyltransferase 1 (397 aa).

9 helical membrane passes run 5 to 25 (ECLLVLAGLLARVGFFSYGIY), 79 to 99 (WVHFGKFIFVLFDLLAGVMVM), 111 to 128 (LILASLWLLNPVVITVST), 156 to 176 (GFVYGVAIHFKIYPIIYALPI), 193 to 213 (LTMGIATLATLVGCGIGMYYI), 257 to 277 (WAEFAFLPQLFICAAVTYVLW), 307 to 327 (YFIWYLLFLPSFLLDTTLSGA), 330 to 350 (IFLIFLWVGTQAWWLYNGYLL), and 362 to 382 (LFSACVTFFLANVYLLAQFIL).

This sequence belongs to the PIGM family.

The protein localises to the endoplasmic reticulum membrane. It participates in glycolipid biosynthesis; glycosylphosphatidylinositol-anchor biosynthesis. Functionally, mannosyltransferase involved in glycosylphosphatidylinositol-anchor biosynthesis. Transfers the first alpha-1,4-mannose to GlcN-acyl-PI during GPI precursor assembly. Required for cell wall integrity. The chain is GPI mannosyltransferase 1 (GPI14) from Eremothecium gossypii (strain ATCC 10895 / CBS 109.51 / FGSC 9923 / NRRL Y-1056) (Yeast).